A 513-amino-acid chain; its full sequence is ATP synthase subunit alpha (513 aa).

ATP is bound at residue 169–176 (GDRQTGKT).

Belongs to the ATPase alpha/beta chains family. As to quaternary structure, F-type ATPases have 2 components, CF(1) - the catalytic core - and CF(0) - the membrane proton channel. CF(1) has five subunits: alpha(3), beta(3), gamma(1), delta(1), epsilon(1). CF(0) has three main subunits: a(1), b(2) and c(9-12). The alpha and beta chains form an alternating ring which encloses part of the gamma chain. CF(1) is attached to CF(0) by a central stalk formed by the gamma and epsilon chains, while a peripheral stalk is formed by the delta and b chains.

Its subcellular location is the cell inner membrane. It catalyses the reaction ATP + H2O + 4 H(+)(in) = ADP + phosphate + 5 H(+)(out). Functionally, produces ATP from ADP in the presence of a proton gradient across the membrane. The alpha chain is a regulatory subunit. This chain is ATP synthase subunit alpha, found in Haemophilus influenzae (strain ATCC 51907 / DSM 11121 / KW20 / Rd).